Here is a 161-residue protein sequence, read N- to C-terminus: MPSFDVVSELDKHEVQNAVDNAIKELDRRYDLKGKGSFEFKDKDQTVMLTAEEEFQLEAMLEILRLALVKRKIDVKCLETKDPYPSGKEKKQEAKFREGIDKDLAKKIVATIKDGKLKVQAAIQGEQVRVTGKKRDDLQEAIALLRTKEFDMPLQFNNFRD.

This sequence belongs to the YajQ family.

Functionally, nucleotide-binding protein. The chain is Nucleotide-binding protein PputGB1_4497 from Pseudomonas putida (strain GB-1).